The sequence spans 642 residues: Threonine--tRNA ligase (642 aa).

One can recognise a TGS domain in the interval 1-61 (MIKVTFPDGN…EHDGKLQLLT (61 aa)). The catalytic stretch occupies residues 240 to 539 (DHRKIGKDLD…LIEEYKGSFP (300 aa)). Zn(2+) contacts are provided by C334, H385, and H516.

This sequence belongs to the class-II aminoacyl-tRNA synthetase family. As to quaternary structure, homodimer. It depends on Zn(2+) as a cofactor.

The protein resides in the cytoplasm. It catalyses the reaction tRNA(Thr) + L-threonine + ATP = L-threonyl-tRNA(Thr) + AMP + diphosphate + H(+). Catalyzes the attachment of threonine to tRNA(Thr) in a two-step reaction: L-threonine is first activated by ATP to form Thr-AMP and then transferred to the acceptor end of tRNA(Thr). Also edits incorrectly charged L-seryl-tRNA(Thr). The protein is Threonine--tRNA ligase of Acholeplasma laidlawii (strain PG-8A).